Here is a 342-residue protein sequence, read N- to C-terminus: Anthranilate phosphoribosyltransferase (342 aa).

Residues Gly-83, Gly-86–Asp-87, Thr-91, Asn-93–Thr-96, Lys-111–Ser-119, and Ala-123 contribute to the 5-phospho-alpha-D-ribose 1-diphosphate site. Gly-83 lines the anthranilate pocket. Ser-95 is a Mg(2+) binding site. Arg-169 provides a ligand contact to anthranilate. Positions 228 and 229 each coordinate Mg(2+).

This sequence belongs to the anthranilate phosphoribosyltransferase family. As to quaternary structure, homodimer. It depends on Mg(2+) as a cofactor.

The catalysed reaction is N-(5-phospho-beta-D-ribosyl)anthranilate + diphosphate = 5-phospho-alpha-D-ribose 1-diphosphate + anthranilate. It participates in amino-acid biosynthesis; L-tryptophan biosynthesis; L-tryptophan from chorismate: step 2/5. In terms of biological role, catalyzes the transfer of the phosphoribosyl group of 5-phosphorylribose-1-pyrophosphate (PRPP) to anthranilate to yield N-(5'-phosphoribosyl)-anthranilate (PRA). The protein is Anthranilate phosphoribosyltransferase of Neisseria gonorrhoeae (strain ATCC 700825 / FA 1090).